We begin with the raw amino-acid sequence, 477 residues long: Probable periplasmic serine endoprotease DegP-like (477 aa).

The first 27 residues, 1 to 27, serve as a signal peptide directing secretion; it reads MSIPRLKSYLMMFAAVLMLGQVLTAQA. Catalysis depends on charge relay system residues histidine 117, aspartate 147, and serine 220. Residues 218–220 and 275–279 contribute to the substrate site; these read GNS and LGVVI. PDZ domains follow at residues 264–355 and 361–466; these read LKKD…IRNG and DISV…LRQG.

This sequence belongs to the peptidase S1C family.

The protein localises to the periplasm. It carries out the reaction Acts on substrates that are at least partially unfolded. The cleavage site P1 residue is normally between a pair of hydrophobic residues, such as Val-|-Val.. Might be efficient in the degradation of transiently denatured and unfolded proteins which accumulate in the periplasm following stress conditions. This Pseudomonas putida (strain ATCC 700007 / DSM 6899 / JCM 31910 / BCRC 17059 / LMG 24140 / F1) protein is Probable periplasmic serine endoprotease DegP-like.